Here is a 264-residue protein sequence, read N- to C-terminus: MEAAPRVRSGLLRILLRAGRLSALLIQNRTHLYRFLLLKMAIFQHWVLGLAQEARGSGSDQARQLPEVIITCALSLALRAGLTLLWVPMWLLLWGPRLAYRVGLCCTRTVRLALGHLCVCEPLGLSPATFRDLFLSCLHSLMLVALLLLLLTWKLMQKAHHFSLGWLPSQNSVLLEAPALLRRLYLWVEHRTTLTSWNLAYLVTWTTCLASHLLQAAFEHTTQLAQAQEVKSQETSGPPPQFLIPESSTTESGPLPPQPETPGE.

A run of 3 helical transmembrane segments spans residues 31-51 (HLYR…LGLA), 74-94 (LSLA…LLLW), and 133-153 (LFLS…LLTW). Over residues 227-236 (AQEVKSQETS) the composition is skewed to polar residues. The segment at 227–264 (AQEVKSQETSGPPPQFLIPESSTTESGPLPPQPETPGE) is disordered. The span at 254-264 (PLPPQPETPGE) shows a compositional bias: pro residues.

As to expression, testis.

The protein localises to the membrane. The sequence is that of Transmembrane protein 270 from Mus musculus (Mouse).